Reading from the N-terminus, the 730-residue chain is Polyphosphate kinase (730 aa).

The span at 1–21 shows a compositional bias: basic and acidic residues; that stretch reads MMRHDRNVTEIDAETRPDENL. The segment at 1 to 39 is disordered; sequence MMRHDRNVTEIDAETRPDENLWHSGDSAVGAPPAATPAA. Residue N86 coordinates ATP. The Mg(2+) site is built by R423 and R453. The Phosphohistidine intermediate role is filled by H483. 3 residues coordinate ATP: Y516, R612, and H640.

The protein belongs to the polyphosphate kinase 1 (PPK1) family. It depends on Mg(2+) as a cofactor. An intermediate of this reaction is the autophosphorylated ppk in which a phosphate is covalently linked to a histidine residue through a N-P bond.

It carries out the reaction [phosphate](n) + ATP = [phosphate](n+1) + ADP. Its function is as follows. Catalyzes the reversible transfer of the terminal phosphate of ATP to form a long-chain polyphosphate (polyP). The sequence is that of Polyphosphate kinase from Mycolicibacterium paratuberculosis (strain ATCC BAA-968 / K-10) (Mycobacterium paratuberculosis).